A 391-amino-acid chain; its full sequence is Casein kinase II subunit alpha (391 aa).

The segment at 36 to 41 is interaction with beta subunit; sequence QDDYQL. The Protein kinase domain occupies 39-324; sequence YQLVRKLGRG…AREAMEHPYF (286 aa). Residues 45–53 and Lys68 each bind ATP; that span reads LGRGKYSEV. Asp156 serves as the catalytic Proton acceptor. Phosphothreonine; by CDK1 occurs at positions 344 and 360. A phosphoserine; by CDK1 mark is found at Ser362 and Ser370.

The protein belongs to the protein kinase superfamily. Ser/Thr protein kinase family. CK2 subfamily. As to quaternary structure, heterotetramer composed of two catalytic subunits (alpha chain and/or alpha' chain) and two regulatory subunits (beta chains). The tetramer can exist as a combination of 2 alpha/2 beta, 2 alpha'/2 beta or 1 alpha/1 alpha'/2 beta subunits. Also part of a CK2-SPT16-SSRP1 complex composed of SSRP1, SUPT16H, CSNK2A1, CSNK2A2 and CSNK2B, which forms following UV irradiation. Interacts with RNPS1. Interacts with SNAI1. Interacts with PML. Interacts with CCAR2. Interacts with HIRIP3. Post-translationally, phosphorylated at Thr-344, Thr-360, Ser-362 and Ser-370 by CDK1 in prophase and metaphase and dephosphorylated during anaphase. Phosphorylation does not directly affect casein kinase 2 activity, but may contribute to its regulation by forming binding sites for interacting proteins and/or targeting it to different compartments.

The protein resides in the nucleus. The catalysed reaction is L-seryl-[protein] + ATP = O-phospho-L-seryl-[protein] + ADP + H(+). It catalyses the reaction L-threonyl-[protein] + ATP = O-phospho-L-threonyl-[protein] + ADP + H(+). With respect to regulation, constitutively active protein kinase whose activity is not directly affected by phosphorylation. Seems to be regulated by level of expression and localization. In terms of biological role, catalytic subunit of a constitutively active serine/threonine-protein kinase complex that phosphorylates a large number of substrates containing acidic residues C-terminal to the phosphorylated serine or threonine. Regulates numerous cellular processes, such as cell cycle progression, apoptosis and transcription, as well as viral infection. May act as a regulatory node which integrates and coordinates numerous signals leading to an appropriate cellular response. During mitosis, functions as a component of the p53/TP53-dependent spindle assembly checkpoint (SAC) that maintains cyclin-B-CDK1 activity and G2 arrest in response to spindle damage. Also required for p53/TP53-mediated apoptosis, phosphorylating 'Ser-392' of p53/TP53 following UV irradiation. Phosphorylates a number of DNA repair proteins in response to DNA damage, such as MDC1, MRE11, RAD9A, RAD51 and HTATSF1, promoting their recruitment to DNA damage sites. Can also negatively regulate apoptosis. Phosphorylates the caspases CASP9 and CASP2 and the apoptotic regulator NOL3. Phosphorylation protects CASP9 from cleavage and activation by CASP8, and inhibits the dimerization of CASP2 and activation of CASP8. Phosphorylates YY1, protecting YY1 from cleavage by CASP7 during apoptosis. Regulates transcription by direct phosphorylation of RNA polymerases I, II, III and IV. Also phosphorylates and regulates numerous transcription factors including NF-kappa-B, STAT1, CREB1, IRF1, IRF2, ATF1, ATF4, SRF, MAX, JUN, FOS, MYC and MYB. Phosphorylates Hsp90 and its co-chaperones FKBP4 and CDC37, which is essential for chaperone function. Mediates sequential phosphorylation of FNIP1, promoting its gradual interaction with Hsp90, leading to activate both kinase and non-kinase client proteins of Hsp90. Regulates Wnt signaling by phosphorylating CTNNB1 and the transcription factor LEF1. Acts as an ectokinase that phosphorylates several extracellular proteins. Phosphorylates PML at 'Ser-565' and primes it for ubiquitin-mediated degradation. Plays an important role in the circadian clock function by phosphorylating BMAL1 at 'Ser-90' which is pivotal for its interaction with CLOCK and which controls CLOCK nuclear entry. Phosphorylates FMR1, promoting FMR1-dependent formation of a membraneless compartment. May phosphorylate histone H2A on 'Ser-1'. The sequence is that of Casein kinase II subunit alpha (CSNK2A1) from Oryctolagus cuniculus (Rabbit).